The following is a 132-amino-acid chain: Acetylcholinesterase (132 aa).

Asparagine 37 is a glycosylation site (N-linked (GlcNAc...) asparagine). Cysteine 45 and cysteine 72 are oxidised to a cystine.

This sequence belongs to the type-B carboxylesterase/lipase family.

The protein localises to the synapse. Its subcellular location is the secreted. It localises to the cell membrane. It carries out the reaction acetylcholine + H2O = choline + acetate + H(+). Its function is as follows. Rapidly hydrolyzes choline released into the synapse. This Culex pipiens pipiens (Northern house mosquito) protein is Acetylcholinesterase (ACE-1).